A 578-amino-acid polypeptide reads, in one-letter code: Protein BONZAI 1 (578 aa).

Gly2 is lipidated: N-myristoyl glycine. C2 domains follow at residues 26 to 163 and 176 to 303; these read ALGA…TSTL and QPHH…NFSL. Ca(2+)-binding residues include Asp63, Asp69, Asp122, and Asp124. Residues 341–560 form the VWFA domain; that stretch reads NFMVAIDFTA…SVVQALLAEL (220 aa).

Belongs to the copine family. Interacts (via VWA domain) with BAP1 and BAP2. Interacts with HSP70-1 and HSP70-2. The cofactor is Ca(2+). Based on mass spectrometry analysis, the N-peptide must be modified and there might be additional modifications other than myristoylation. Expressed in roots and flowers and, at higher levels, in leaves and stems. Strongly expressed in growing tissues. Not detected in green siliques.

It is found in the cell membrane. Its function is as follows. Negative regulator of cell death and defense responses. Negative regulator of several R genes, including SNC1. May have effects in promoting growth and development. May function in membrane trafficking and in fusion of vesicles with plasma membrane at low temperature. Exhibits calcium-dependent phospholipid binding properties. The polypeptide is Protein BONZAI 1 (BON1) (Arabidopsis thaliana (Mouse-ear cress)).